A 900-amino-acid polypeptide reads, in one-letter code: Probable dipeptidyl-aminopeptidase B (900 aa).

The tract at residues 1 to 83 is disordered; the sequence is MARTDQGLGA…DILSHPRDKS (83 aa). Over 1-90 the chain is Cytoplasmic; sequence MARTDQGLGA…DKSKRSRGSR (90 aa). Over residues 24–39 the composition is skewed to low complexity; sequence NSFSSTDSLSTDGSLF. The segment covering 44-55 has biased composition (polar residues); that stretch reads NATQFQKSTQLP. The chain crosses the membrane as a helical; Signal-anchor for type II membrane protein span at residues 91–111; it reads WIWVIGLLCLGGWILAFILFW. The Vacuolar portion of the chain corresponds to 112-900; sequence GRRNNNSDIS…HHVGSALAAT (789 aa). N-linked (GlcNAc...) asparagine glycosylation is found at Asn150, Asn195, Asn348, Asn410, Asn514, Asn639, and Asn644. The active-site Charge relay system is the Ser753. An N-linked (GlcNAc...) asparagine glycan is attached at Asn812. Residues Asp830 and His863 each act as charge relay system in the active site.

The protein belongs to the peptidase S9B family.

It localises to the vacuole membrane. It carries out the reaction Release of an N-terminal dipeptide, Xaa-Yaa-|-Zaa-, from a polypeptide, preferentially when Yaa is Pro, provided Zaa is neither Pro nor hydroxyproline.. Type IV dipeptidyl-peptidase which removes N-terminal dipeptides sequentially from polypeptides having unsubstituted N-termini provided that the penultimate residue is proline. The sequence is that of Probable dipeptidyl-aminopeptidase B (dapB) from Talaromyces stipitatus (strain ATCC 10500 / CBS 375.48 / QM 6759 / NRRL 1006) (Penicillium stipitatum).